Here is a 351-residue protein sequence, read N- to C-terminus: uncharacterized protein (351 aa).

A signal peptide spans 1 to 27 (MKNKKRVLIASSLSCAILLLSAATTQA). Positions 28-71 (NSAHKDSQDQNKKEHVDKSQQKDKRNVTNKDKNSTVPDDIGKNG) are disordered. The span at 30-60 (AHKDSQDQNKKEHVDKSQQKDKRNVTNKDKN) shows a compositional bias: basic and acidic residues.

This sequence belongs to the aerolysin family.

This is an uncharacterized protein from Staphylococcus aureus (strain N315).